We begin with the raw amino-acid sequence, 582 residues long: Solute carrier family 15 member 3 (582 aa).

The interval Met-1–Val-20 is disordered. 4 helical membrane-spanning segments follow: residues Thr-33–Thr-53, Leu-77–Tyr-97, Leu-102–Ile-122, and Pro-155–Val-175. Asn-178 carries N-linked (GlcNAc...) asparagine glycosylation. Residues Trp-201–Glu-221 traverse the membrane as a helical segment. Asn-223 carries an N-linked (GlcNAc...) asparagine glycan. 2 helical membrane passes run Ile-232 to Ile-252 and Phe-312 to Tyr-332. A glycan (N-linked (GlcNAc...) asparagine) is linked at Asn-357. Transmembrane regions (helical) follow at residues Ile-371–Lys-391 and Leu-409–Leu-429. Residue Asn-440 is glycosylated (N-linked (GlcNAc...) asparagine). Helical transmembrane passes span Tyr-466–Tyr-485, Gly-498–Leu-518, and Leu-541–Ala-561. N-linked (GlcNAc...) asparagine glycosylation is present at Asn-575.

This sequence belongs to the major facilitator superfamily. Proton-dependent oligopeptide transporter (POT/PTR) (TC 2.A.17) family. Abundant expression in lung, spleen and thymus, and detected faintly in brain, liver, adrenal gland and heart at protein level.

Its subcellular location is the lysosome membrane. It localises to the endosome membrane. It carries out the reaction N-acetyl-D-muramoyl-L-alanyl-D-isoglutamine(out) + n H(+)(out) = N-acetyl-D-muramoyl-L-alanyl-D-isoglutamine(in) + n H(+)(in). It catalyses the reaction glycylglycylglycine(out) + n H(+)(out) = glycylglycylglycine(in) + n H(+)(in). The enzyme catalyses carnosine(out) + n H(+)(out) = carnosine(in) + n H(+)(in). The catalysed reaction is L-histidine(out) + n H(+)(out) = L-histidine(in) + n H(+)(in). Proton-coupled amino-acid transporter that transports free histidine and certain di- and tripeptides, and is involved in innate immune response. Also able to transport carnosine. Involved in the detection of microbial pathogens by toll-like receptors (TLRs) and NOD-like receptors (NLRs), probably by mediating transport of bacterial peptidoglycans across the endolysosomal membrane: catalyzes the transport of certain bacterial peptidoglycans, such as muramyl dipeptide (MDP), the NOD2 ligand. The protein is Solute carrier family 15 member 3 (Slc15a3) of Rattus norvegicus (Rat).